Reading from the N-terminus, the 156-residue chain is Crossover junction endodeoxyribonuclease RuvC (156 aa).

Residues Asp-9, Glu-69, and Asp-141 contribute to the active site. Residues Asp-9, Glu-69, and Asp-141 each contribute to the Mg(2+) site.

It belongs to the RuvC family. As to quaternary structure, homodimer which binds Holliday junction (HJ) DNA. The HJ becomes 2-fold symmetrical on binding to RuvC with unstacked arms; it has a different conformation from HJ DNA in complex with RuvA. In the full resolvosome a probable DNA-RuvA(4)-RuvB(12)-RuvC(2) complex forms which resolves the HJ. It depends on Mg(2+) as a cofactor.

The protein localises to the cytoplasm. The catalysed reaction is Endonucleolytic cleavage at a junction such as a reciprocal single-stranded crossover between two homologous DNA duplexes (Holliday junction).. In terms of biological role, the RuvA-RuvB-RuvC complex processes Holliday junction (HJ) DNA during genetic recombination and DNA repair. Endonuclease that resolves HJ intermediates. Cleaves cruciform DNA by making single-stranded nicks across the HJ at symmetrical positions within the homologous arms, yielding a 5'-phosphate and a 3'-hydroxyl group; requires a central core of homology in the junction. The consensus cleavage sequence is 5'-(A/T)TT(C/G)-3'. Cleavage occurs on the 3'-side of the TT dinucleotide at the point of strand exchange. HJ branch migration catalyzed by RuvA-RuvB allows RuvC to scan DNA until it finds its consensus sequence, where it cleaves and resolves the cruciform DNA. The polypeptide is Crossover junction endodeoxyribonuclease RuvC (Acaryochloris marina (strain MBIC 11017)).